A 2158-amino-acid chain; its full sequence is Non-reducing polyketide synthase Preu8 (2158 aa).

Residues 4 to 241 form an N-terminal acylcarrier protein transacylase domain (SAT) region; it reads LVLGDQVADH…TPIPVFAPYH (238 aa). The Ketosynthase family 3 (KS3) domain occupies 369-801; that stretch reads NDKIAIVGMS…GGNTAIILED (433 aa). Catalysis depends on for beta-ketoacyl synthase activity residues Cys-541, His-676, and His-719. A malonyl-CoA:ACP transacylase (MAT) domain region spans residues 900–1215; it reads FTFTGQGSQY…ANSVSTLFLA (316 aa). The active-site For acyl/malonyl transferase activity is Ser-989. The segment at 1285–1603 is product template (PT) domain; that stretch reads SCQRIVREEL…RRVLNIMMPP (319 aa). Residues 1287 to 1423 are N-terminal hotdog fold; the sequence is QRIVREELHA…GTVKYEDVSQ (137 aa). A PKS/mFAS DH domain is found at 1287–1598; the sequence is QRIVREELHA…FQNIARRVLN (312 aa). Catalysis depends on His-1319, which acts as the Proton acceptor; for dehydratase activity. The tract at residues 1451–1598 is C-terminal hotdog fold; sequence AHKVLRGMAY…FQNIARRVLN (148 aa). Asp-1511 serves as the catalytic Proton donor; for dehydratase activity. Positions 1619-1639 are enriched in low complexity; it reads KKAASPTLAPAKAAKPAAKTS. A disordered region spans residues 1619 to 1654; the sequence is KKAASPTLAPAKAAKPAAKTSKPSKARAKPAADSTT. Residues 1651-1725 enclose the Carrier 1 domain; that stretch reads DSTTSRVMKI…QMKKFFSQYD (75 aa). Ser-1685 bears the O-(pantetheine 4'-phosphoryl)serine mark. A disordered region spans residues 1723-1779; it reads QYDGAPIPDDGDDSDGTDEPSNFSTPSYGADNASTPPSSAPSVNGKSSPENHEVLES. Residues 1731–1740 are compositionally biased toward acidic residues; it reads DDGDDSDGTD. A compositionally biased stretch (polar residues) spans 1743–1770; that stretch reads SNFSTPSYGADNASTPPSSAPSVNGKSS. Residues 1779 to 1853 form the Carrier 2 domain; it reads STEVSLARKI…DIENELGMRP (75 aa). An O-(pantetheine 4'-phosphoryl)serine modification is found at Ser-1813. The interval 1847-1879 is disordered; the sequence is NELGMRPKPKPKAEAAPPKSSAKASPSANKQPQ. Residues 1860–1876 show a composition bias toward low complexity; it reads EAAPPKSSAKASPSANK. The interval 1894-2144 is thioesterase (TE) domain; the sequence is SQYPPANSVL…NHFTMMKGDH (251 aa).

Pantetheine 4'-phosphate is required as a cofactor.

Its function is as follows. Non-reducing polyketide synthase; part of a gene cluster that mediates the biosynthesis of a yet unidentified natural product. This is Non-reducing polyketide synthase Preu8 from Preussia isomera (Coprophilous fungus).